The primary structure comprises 410 residues: Putative formamidase C869.04 (410 aa).

Belongs to the acetamidase/formamidase family. As to quaternary structure, homotrimer.

It localises to the cytoplasm. The protein resides in the nucleus. The catalysed reaction is formamide + H2O = formate + NH4(+). Hydrolyzes formamide with the production of ammonia which can be used as a source of nitrogen for growth. May also act on acetamide, propanamide and butanamide. This chain is Putative formamidase C869.04, found in Schizosaccharomyces pombe (strain 972 / ATCC 24843) (Fission yeast).